Here is a 2004-residue protein sequence, read N- to C-terminus: Histone acetyltransferase KAT6A (2004 aa).

The SAMD1-like winged helix (WH) domain maps to M1–P77. The interval M1 to H144 is required for activation of RUNX1-1. The tract at residues E52–L166 is required for nuclear localization. In terms of domain architecture, H15 spans Q95–T171. Positions H144–D664 are interaction with PML. K172 carries the post-translational modification N6-acetyllysine. 2 PHD-type zinc fingers span residues I206–C265 and C259–R313. Residues P312 to D664 form an interaction with RUNX1-1 region. The interval P334–A375 is disordered. N6-acetyllysine occurs at positions 350 and 355. Position 369 is a phosphothreonine; by PKB/AKT1 (T369). S420 is subject to Phosphoserine. The interval K441–Q464 is disordered. A compositionally biased stretch (polar residues) spans K446–Q457. S473 is subject to Phosphoserine. The tract at residues I488–P778 is catalytic. In terms of domain architecture, MYST-type HAT spans P504 to P778. The mediates interaction with BRPF1, required for histone H3 acetyltransferase activity stretch occupies residues R507–E810. Residues L537 to W562 form a C2HC MYST-type zinc finger. Position 604 is an N6-acetyllysine; by autocatalysis (K604). Residues S645 to I649 and Q654 to R660 contribute to the acetyl-CoA site. E680 (proton donor/acceptor) is an active-site residue. Position 684 (S684) interacts with acetyl-CoA. Disordered regions lie at residues V785 to D1445, Q1461 to Q1621, and S1637 to P1721. 2 positions are modified to phosphoserine: S787 and S812. Over residues S787–Q803 the composition is skewed to acidic residues. K815 is subject to N6-acetyllysine. A compositionally biased stretch (basic and acidic residues) spans V817–E836. K834 participates in a covalent cross-link: Glycyl lysine isopeptide (Lys-Gly) (interchain with G-Cter in SUMO2). A compositionally biased stretch (basic residues) spans R864–R873. Positions K874 to L888 are enriched in basic and acidic residues. A Phosphotyrosine modification is found at Y899. Composition is skewed to basic and acidic residues over residues G931–E942 and K953–V980. 3 positions are modified to phosphoserine: S941, S954, and S974. K1007 carries the N6-acetyllysine modification. Basic residues predominate over residues T1009–N1030. The segment covering S1031 to T1042 has biased composition (low complexity). 2 stretches are compositionally biased toward acidic residues: residues E1043 to D1053 and F1065 to E1078. Residues S1089, S1090, and S1113 each carry the phosphoserine modification. Residues E1107–D1118 show a composition bias toward acidic residues. Positions L1146–G1172 are enriched in basic residues. Residues K1203–R1223 show a composition bias toward basic and acidic residues. A compositionally biased stretch (acidic residues) spans K1224–A1245. Residues S1246–E1262 show a composition bias toward low complexity. Residues E1275–E1287 are compositionally biased toward basic and acidic residues. A compositionally biased stretch (acidic residues) spans E1288 to A1305. Composition is skewed to basic and acidic residues over residues H1323–P1345, K1358–E1367, and E1398–L1420. Residue K1342 forms a Glycyl lysine isopeptide (Lys-Gly) (interchain with G-Cter in SUMO2) linkage. A compositionally biased stretch (low complexity) spans S1481–P1503. Polar residues predominate over residues G1508–T1529. Positions G1517–R1642 are interaction with RUNX1-2. Residues G1517–A1741 form an interaction with PML region. A compositionally biased stretch (low complexity) spans D1534–S1548. Polar residues predominate over residues I1556–M1573. Residues G1574–Q1621 show a composition bias toward low complexity. The segment covering Q1650–Q1699 has biased composition (pro residues). A compositionally biased stretch (polar residues) spans L1702–T1712. The tract at residues S1913–Q1948 is required for activation of RUNX1-2.

Belongs to the MYST (SAS/MOZ) family. As to quaternary structure, component of the MOZ/MORF complex composed at least of ING5, KAT6A, KAT6B, MEAF6 and one of BRPF1, BRD1/BRPF2 and BRPF3. Interacts with RUNX1; phosphorylation of RUNX1 enhances the interaction. Interacts with RUNX2. Interacts with p53/TP53. Interacts with PML (isoform PML-4) and this interaction positively regulates its acetylation activity towards p53/TP53. In terms of processing, autoacetylation at Lys-604 is required for proper function. Autoacetylated. Phosphorylation at Thr-369 by PKB/AKT1 inhibits its interaction with PML and negatively regulates its acetylation activity towards p53/TP53.

The protein localises to the nucleus. The protein resides in the nucleolus. It is found in the nucleoplasm. It localises to the PML body. The catalysed reaction is L-lysyl-[protein] + acetyl-CoA = N(6)-acetyl-L-lysyl-[protein] + CoA + H(+). Histone acetyltransferase that acetylates lysine residues in histone H3 and histone H4 (in vitro). Component of the MOZ/MORF complex which has a histone H3 acetyltransferase activity. May act as a transcriptional coactivator for RUNX1 and RUNX2. Acetylates p53/TP53 at 'Lys-120' and 'Lys-382' and controls its transcriptional activity via association with PML. The chain is Histone acetyltransferase KAT6A (KAT6A) from Homo sapiens (Human).